Here is a 549-residue protein sequence, read N- to C-terminus: Biotin-dependent acetyl-/propionyl-coenzyme A carboxylase beta5 subunit (549 aa).

The 257-residue stretch at 25 to 281 (TAGKLAELHK…NNFTDAPRYS (257 aa)) folds into the CoA carboxyltransferase N-terminal domain. One can recognise a CoA carboxyltransferase C-terminal domain in the interval 295 to 542 (AKDLELDTLI…ERKIAHLPPK (248 aa)).

This sequence belongs to the AccD/PCCB family. In terms of assembly, the biotin-dependent acyl-CoA carboxylase complex is composed of AccA3, which contains the biotin carboxylase (BC) and biotin carboxyl carrier protein (BCCP) domains, and AccD5, which contains the carboxyl transferase (CT) domain.

It carries out the reaction N(6)-carboxybiotinyl-L-lysyl-[protein] + acetyl-CoA = N(6)-biotinyl-L-lysyl-[protein] + malonyl-CoA. The catalysed reaction is N(6)-carboxybiotinyl-L-lysyl-[protein] + propanoyl-CoA = methylmalonyl-CoA + N(6)-biotinyl-L-lysyl-[protein]. It participates in lipid metabolism; mycolic acid biosynthesis. In terms of biological role, component of a biotin-dependent acyl-CoA carboxylase complex. This subunit transfers the CO2 from carboxybiotin to the CoA ester substrate. When associated with the alpha3 subunit AccA3, is involved in the carboxylation of acetyl-CoA and propionyl-CoA. The protein is Biotin-dependent acetyl-/propionyl-coenzyme A carboxylase beta5 subunit (accD5) of Mycobacterium leprae (strain TN).